A 513-amino-acid chain; its full sequence is ATP synthase subunit alpha (513 aa).

169-176 (GDRQTGKT) is a binding site for ATP.

It belongs to the ATPase alpha/beta chains family. As to quaternary structure, F-type ATPases have 2 components, CF(1) - the catalytic core - and CF(0) - the membrane proton channel. CF(1) has five subunits: alpha(3), beta(3), gamma(1), delta(1), epsilon(1). CF(0) has three main subunits: a(1), b(2) and c(9-12). The alpha and beta chains form an alternating ring which encloses part of the gamma chain. CF(1) is attached to CF(0) by a central stalk formed by the gamma and epsilon chains, while a peripheral stalk is formed by the delta and b chains.

Its subcellular location is the cell inner membrane. It carries out the reaction ATP + H2O + 4 H(+)(in) = ADP + phosphate + 5 H(+)(out). Its function is as follows. Produces ATP from ADP in the presence of a proton gradient across the membrane. The alpha chain is a regulatory subunit. This is ATP synthase subunit alpha from Pasteurella multocida (strain Pm70).